Consider the following 181-residue polypeptide: Mitochondrial inner membrane protein Mpv17 (181 aa).

The next 4 helical transmembrane spans lie at methionine 20–leucine 37, phenylalanine 51–phenylalanine 67, leucine 86–phenylalanine 103, and valine 152–isoleucine 169.

Belongs to the peroxisomal membrane protein PXMP2/4 family.

The protein resides in the mitochondrion inner membrane. Its function is as follows. Involved in mitochondria homeostasis. This is Mitochondrial inner membrane protein Mpv17 from Caenorhabditis elegans.